A 546-amino-acid polypeptide reads, in one-letter code: MKKFLKYLLVLIILILIAGIVFLFRPIASKQVQTAKDEPVVDAVLVGGGIMSATLGTYFTELEPNWQIRMYERLDQVAQESSNGFNNAGTGHSGFMEMNYTEEKNGKMEIAKAEKVASQFEVAKQFWSYQVKQGVLAEPKTFINPVPHIAFVWGDNVKFLEKRYAAMIQSPLFKGMKFTEDPAVIKQWAPLVMTDRDPTQKVAATRMEVGSDVNYGSITKQLVNHLNQNPNFKLQTSTEVTGISQNDDKTWTVSFKNLKTGKTDHVKTRFVFIGAGGAAVKLLQLTGLPEAKQYAGFPVGGEFLITDNPAITAQHTAKVYGRAELGAPPMSVPHIDTRYIDGKKYVLFGPFATYSNKFLKNGSQLDLLASTNKSNVLPMTTVGLENLDLVKYLVSQVMMSDEDRLNELRKYYPDAKAEDWRLSQGGQRVQIIKKEPGKPATLQFGTEIFASKDGAVTALLGASPGASTSPYIMLNLLEKAFPQQTEGKWNQKLHEIVVSYKQDLSKDPVLLDKVRQYTSSTLGLNYTSPFKAANDETAAAPVAKAN.

This sequence belongs to the MQO family. FAD serves as cofactor.

The enzyme catalyses (S)-malate + a quinone = a quinol + oxaloacetate. It functions in the pathway carbohydrate metabolism; tricarboxylic acid cycle; oxaloacetate from (S)-malate (quinone route): step 1/1. The polypeptide is Probable malate:quinone oxidoreductase (Acinetobacter baumannii (strain AB0057)).